The sequence spans 329 residues: GTP 3',8-cyclase (329 aa).

In terms of domain architecture, Radical SAM core spans 8-234 (AFARKFYYLR…QQRARSDGPA (227 aa)). R17 lines the GTP pocket. 2 residues coordinate [4Fe-4S] cluster: C24 and C28. Position 30 (Y30) interacts with S-adenosyl-L-methionine. C31 is a binding site for [4Fe-4S] cluster. R68 is a binding site for GTP. Position 72 (G72) interacts with S-adenosyl-L-methionine. T99 is a binding site for GTP. An S-adenosyl-L-methionine-binding site is contributed by S123. Residue K160 participates in GTP binding. An S-adenosyl-L-methionine-binding site is contributed by M194. Residues C257 and C260 each contribute to the [4Fe-4S] cluster site. 262 to 264 (RLR) contributes to the GTP binding site. C274 contributes to the [4Fe-4S] cluster binding site.

This sequence belongs to the radical SAM superfamily. MoaA family. In terms of assembly, monomer and homodimer. Requires [4Fe-4S] cluster as cofactor.

It carries out the reaction GTP + AH2 + S-adenosyl-L-methionine = (8S)-3',8-cyclo-7,8-dihydroguanosine 5'-triphosphate + 5'-deoxyadenosine + L-methionine + A + H(+). It functions in the pathway cofactor biosynthesis; molybdopterin biosynthesis. In terms of biological role, catalyzes the cyclization of GTP to (8S)-3',8-cyclo-7,8-dihydroguanosine 5'-triphosphate. The polypeptide is GTP 3',8-cyclase (Pectobacterium atrosepticum (strain SCRI 1043 / ATCC BAA-672) (Erwinia carotovora subsp. atroseptica)).